The sequence spans 286 residues: tRNA (guanine-N(7)-)-methyltransferase (286 aa).

Phosphoserine occurs at positions 7 and 59. S-adenosyl-L-methionine is bound by residues glycine 103, 126-127, 161-162, and cysteine 181; these read EI and NA. Aspartate 184 is an active-site residue. An S-adenosyl-L-methionine-binding site is contributed by 259–261; it reads TEE.

Belongs to the class I-like SAM-binding methyltransferase superfamily. TrmB family. Forms a complex with TRM82.

The protein resides in the nucleus. The enzyme catalyses guanosine(46) in tRNA + S-adenosyl-L-methionine = N(7)-methylguanosine(46) in tRNA + S-adenosyl-L-homocysteine. Its pathway is tRNA modification; N(7)-methylguanine-tRNA biosynthesis. Methyltransferase that catalyzes the formation of N(7)-methylguanine at position 46 (m7G46) in tRNA, a modification required to maintain stability of tRNAs; its absence resulting in tRNA decay. Both the D-stem and T-stem structures of tRNAs are required for efficient methyltransferase activity. This is tRNA (guanine-N(7)-)-methyltransferase from Saccharomyces cerevisiae (strain YJM789) (Baker's yeast).